Here is a 1040-residue protein sequence, read N- to C-terminus: Kinesin-like protein KIN-14H (1040 aa).

The Calponin-homology (CH) domain maps to 54-176 (DLRRYEAARW…CVLALKSYRE (123 aa)). Residues 208–242 (SEVPVDAVTNSPSSTPSSEQPLLDQSDSNTKNDGT) form a disordered region. The span at 215 to 242 (VTNSPSSTPSSEQPLLDQSDSNTKNDGT) shows a compositional bias: polar residues. The region spanning 434-754 (SIRVYCRVRP…LKFAERVATV (321 aa)) is the Kinesin motor domain. 517 to 524 (GQTGSGKT) is an ATP binding site. A coiled-coil region spans residues 761–796 (VNKDTSEVKELKEQIASLKLALARKESGADQTQLQR). The segment covering 809-818 (LGVSSSFSKS) has biased composition (low complexity). 3 disordered regions span residues 809 to 871 (LGVS…GKEE), 887 to 926 (EDEITRSSKPENRAHTQLEKRTSSLKREATRGVDKNKCNS), and 969 to 1040 (MPRP…QNPK). Residues 840-851 (IEGQSDSASSLD) show a composition bias toward polar residues. The span at 887 to 923 (EDEITRSSKPENRAHTQLEKRTSSLKREATRGVDKNK) shows a compositional bias: basic and acidic residues. Polar residues predominate over residues 1018-1031 (SPGQTSSRHNNSTV).

This sequence belongs to the TRAFAC class myosin-kinesin ATPase superfamily. Kinesin family. KIN-14 subfamily.

The chain is Kinesin-like protein KIN-14H from Arabidopsis thaliana (Mouse-ear cress).